We begin with the raw amino-acid sequence, 682 residues long: Pneumocandin biosynthesis cluster protein B (682 aa).

Positions 63–73 are enriched in low complexity; sequence SSLSSTEVTSS. 3 disordered regions span residues 63–86, 107–129, and 251–358; these read SSLS…DAPE, QNTP…DTNQ, and SEST…SPAN. Polar residues-rich tracts occupy residues 257 to 279 and 310 to 320; these read NTGS…SHSS and PRQTTEATPCD. Residues 335–349 are compositionally biased toward basic and acidic residues; the sequence is PERRSMKMVRKEARD.

In terms of biological role, part of the gene cluster that mediates the biosynthesis of pneumocandins, lipohexapeptides of the echinocandin family that prevent fungal cell wall formation by non-competitive inhibition of beta-1,3-glucan synthase. The 10,12-dimethylmyristoyl side chain is synthesized by the reducing polyketide synthase gloL/GLPKS4. The thioesterase gloN/GLHYD exclusively interacts with gloL/GLPKS4 to maintain turnover of the polyketide side chain. The 10R,12S-dimethylmyristic acid is then transferred to the first thiolation domain of the nonribosomal peptide synthetase gloA/GLNRPS4 by the acyl-AMP ligase gloD/GLligase, followed by its acylation to L-ornithine to trigger elongation of the cyclic hexapeptide. L-ornithine, 4R-hydroxyl-L-proline (generated from L-proline by the dioxygenase gloF/GLOXY2), 3S-hydroxyl-L-homotyrosine (generated by gloG/GLHtyB, gloH/GLHtyA, gloI/GLHtyC, gloJ/GLHtyD and hydroxylated at C-3 by the dioxygenase gloM/GLOXY1), 3R-hydroxyl-L-glutamine (generated from L-glutamine probably by the dioxygenase gloE/GLOXY3) and 3S-hydroxyl-L-proline (generated from L-proline by the dioxygenase gloF/GLOXY2 to yield pneumocandin B0), or 3S-hydroxyl-4S-methyl-L-proline (generated from L-leucine by the dioxygenase gloC/GLOXY4 to yield pneumocandin A0) are sequentially added to the growing chain. The last C domain of gloA/GLNRPS4 is proposed to be responsible for cyclization by condensation to form the peptide bond between L-ornithine and 3S-hydroxyl-4S-methyl-L-proline (for pneumocandin A0) or 3S-hydroxyl-L-proline (for pneumocandin B0). Finally, the subsequent C-4 hydroxylation of 3S-hydroxyl-L-homotyrosine and L-ornithine dihydroxylation at C-4 and C-5 are performed by the cytochrome P450 monooxygenases gloP/GLP450-1 and gloO/GLP450-2, respectively. This is Pneumocandin biosynthesis cluster protein B from Glarea lozoyensis (strain ATCC 20868 / MF5171).